A 113-amino-acid chain; its full sequence is uncharacterized protein (113 aa).

The protein localises to the mitochondrion. This is an uncharacterized protein from Arabidopsis thaliana (Mouse-ear cress).